The chain runs to 292 residues: Elongation factor Ts (292 aa).

The segment at 80–83 (TDFV) is involved in Mg(2+) ion dislocation from EF-Tu.

Belongs to the EF-Ts family.

Its subcellular location is the cytoplasm. Functionally, associates with the EF-Tu.GDP complex and induces the exchange of GDP to GTP. It remains bound to the aminoacyl-tRNA.EF-Tu.GTP complex up to the GTP hydrolysis stage on the ribosome. In Ralstonia nicotianae (strain ATCC BAA-1114 / GMI1000) (Ralstonia solanacearum), this protein is Elongation factor Ts.